The chain runs to 423 residues: Glutamate-1-semialdehyde 2,1-aminomutase (423 aa).

Position 258 is an N6-(pyridoxal phosphate)lysine (K258).

The protein belongs to the class-III pyridoxal-phosphate-dependent aminotransferase family. HemL subfamily. Pyridoxal 5'-phosphate is required as a cofactor.

It is found in the cytoplasm. It catalyses the reaction (S)-4-amino-5-oxopentanoate = 5-aminolevulinate. It functions in the pathway porphyrin-containing compound metabolism; protoporphyrin-IX biosynthesis; 5-aminolevulinate from L-glutamyl-tRNA(Glu): step 2/2. In Pyrobaculum arsenaticum (strain DSM 13514 / JCM 11321 / PZ6), this protein is Glutamate-1-semialdehyde 2,1-aminomutase.